A 98-amino-acid polypeptide reads, in one-letter code: Keratin, high sulfur matrix protein, IIIB4 (98 aa).

Ala-1 carries the post-translational modification N-acetylalanine.

This sequence belongs to the KRTAP type 3 family. In terms of assembly, interacts with wool keratins. As to expression, wool.

In terms of biological role, in the wool cortex, wool keratin intermediate filaments are embedded in an interfilamentous matrix, consisting of hair keratin-associated proteins (KRTAP), which are essential for the formation of a rigid and resistant wool shaft through their extensive disulfide bond cross-linking with abundant cysteine residues of wool keratins. The matrix proteins include the high-sulfur and high-glycine-tyrosine keratins. The protein is Keratin, high sulfur matrix protein, IIIB4 of Ovis aries (Sheep).